The following is a 198-amino-acid chain: Imidazoleglycerol-phosphate dehydratase (198 aa).

This sequence belongs to the imidazoleglycerol-phosphate dehydratase family.

It localises to the cytoplasm. It catalyses the reaction D-erythro-1-(imidazol-4-yl)glycerol 3-phosphate = 3-(imidazol-4-yl)-2-oxopropyl phosphate + H2O. The protein operates within amino-acid biosynthesis; L-histidine biosynthesis; L-histidine from 5-phospho-alpha-D-ribose 1-diphosphate: step 6/9. This is Imidazoleglycerol-phosphate dehydratase from Streptomyces griseus subsp. griseus (strain JCM 4626 / CBS 651.72 / NBRC 13350 / KCC S-0626 / ISP 5235).